A 578-amino-acid polypeptide reads, in one-letter code: GRAM domain-containing protein 4 (578 aa).

Disordered regions lie at residues 23 to 58 (ESPN…AGPG) and 136 to 159 (TEEQ…ERRS). Serine 24 and serine 28 each carry phosphoserine. Basic and acidic residues predominate over residues 44–53 (SPRDSEELRD). Positions 83–143 (HLEIALLEKH…ARTEEQMAQQ (61 aa)) form a coiled coil. Helical transmembrane passes span 240–260 (VYMN…LAIL), 334–354 (ITQK…FFPY), and 356–376 (LVGL…DFIF). Residues 415-435 (QTTSSRSYVPSAPAGLGKEED) are disordered. Positions 445–523 (GNFHEIFNLT…VDITDIQKYK (79 aa)) constitute a GRAM domain.

As to quaternary structure, interacts with RTN4 (isoform B). As to expression, expressed in lung and in primary lung squamous cell carcinoma (LSCC).

It localises to the mitochondrion membrane. It is found in the endoplasmic reticulum membrane. Plays a role as a mediator of E2F1-induced apoptosis in the absence of p53/TP53. Plays a role as a mediator of E2F1-induced apoptosis in the absence of p53/TP53. Inhibits TLR9 response to nucelic acids and regulates TLR9-mediated innate immune response. The polypeptide is GRAM domain-containing protein 4 (Homo sapiens (Human)).